Reading from the N-terminus, the 681-residue chain is Threonine--tRNA ligase (681 aa).

A TGS domain is found at 3 to 97 (KQIQVTLPDG…EEDVQLALLT (95 aa)). The segment at 279 to 576 (DHRVLGKQLD…LIEHYAGAFP (298 aa)) is catalytic. 3 residues coordinate Zn(2+): C372, H423, and H553.

Belongs to the class-II aminoacyl-tRNA synthetase family. Homodimer. The cofactor is Zn(2+).

It is found in the cytoplasm. It catalyses the reaction tRNA(Thr) + L-threonine + ATP = L-threonyl-tRNA(Thr) + AMP + diphosphate + H(+). Functionally, catalyzes the attachment of threonine to tRNA(Thr) in a two-step reaction: L-threonine is first activated by ATP to form Thr-AMP and then transferred to the acceptor end of tRNA(Thr). Also edits incorrectly charged L-seryl-tRNA(Thr). This is Threonine--tRNA ligase from Acidobacterium capsulatum (strain ATCC 51196 / DSM 11244 / BCRC 80197 / JCM 7670 / NBRC 15755 / NCIMB 13165 / 161).